The chain runs to 431 residues: Tyrosine--tRNA ligase (431 aa).

Y33 is a binding site for L-tyrosine. Residues 38–47 (PTADSLHIGS) carry the 'HIGH' region motif. Residues Y172 and Q176 each coordinate L-tyrosine. A 'KMSKS' region motif is present at residues 234–238 (KFGKS). K237 contacts ATP. One can recognise an S4 RNA-binding domain in the interval 364–431 (LDIVTVLNEK…KKNYFVIRVV (68 aa)).

Belongs to the class-I aminoacyl-tRNA synthetase family. TyrS type 1 subfamily. In terms of assembly, homodimer.

It is found in the cytoplasm. It carries out the reaction tRNA(Tyr) + L-tyrosine + ATP = L-tyrosyl-tRNA(Tyr) + AMP + diphosphate + H(+). Catalyzes the attachment of tyrosine to tRNA(Tyr) in a two-step reaction: tyrosine is first activated by ATP to form Tyr-AMP and then transferred to the acceptor end of tRNA(Tyr). This is Tyrosine--tRNA ligase from Flavobacterium johnsoniae (strain ATCC 17061 / DSM 2064 / JCM 8514 / BCRC 14874 / CCUG 350202 / NBRC 14942 / NCIMB 11054 / UW101) (Cytophaga johnsonae).